The following is a 1846-amino-acid chain: Brefeldin A-inhibited guanine nucleotide-exchange protein 1 (1846 aa).

The DCB; DCB:DCB domain and DCB:HUS domain interaction stretch occupies residues 2–224 (YEGKKTKNMF…QEAKQMERER (223 aa)). Residue S52 is modified to Phosphoserine. Disordered regions lie at residues 217–248 (AKQMERERHRQQHHLLQSPVSHHEPESPHLRY), 264–302 (DLDPQTHDVDKSLQDDIEPENGSDISSAENEQTEADQAT), and 347–410 (VSAS…SPGA). Positions 267-277 (PQTHDVDKSLQ) are enriched in basic and acidic residues. 5 positions are modified to phosphoserine: S286, S289, S290, S394, and S407. Over residues 391 to 406 (SVSSNDTQESGNSSGP) the composition is skewed to polar residues. The tract at residues 554–574 (ADAQSVVDIYVNYDCDLNAAN) is HUS; DCB:HUS domain interaction. The segment at 631-684 (PNSQTTLGQEKPSEQEISEIKHPETINRYGSLNSLESTSSSGIGSYSTQMSGTD) is disordered. The span at 641 to 655 (KPSEQEISEIKHPET) shows a compositional bias: basic and acidic residues. Residues 661 to 681 (SLNSLESTSSSGIGSYSTQMS) show a composition bias toward low complexity. Positions 688–877 (QFEVLKQQKE…SAIYNEIAGK (190 aa)) constitute an SEC7 domain. Residues 708–712 (KKPKR) carry the Nuclear localization signal (NLS) motif. Residues S1076, S1563, and S1566 each carry the phosphoserine modification. Residues 1571–1600 (DSAQPRSSDNRQQAPLVSVSPASEEVSKGR) form a disordered region. A compositionally biased stretch (polar residues) spans 1574–1585 (QPRSSDNRQQAP).

As to quaternary structure, homodimer. Interacts with ARFGEF2/BIG2; both proteins are probably part of the same or very similar macromolecular complexes. Interacts with FKBP2. Interacts with MYO9B. Interacts with PRKAR1A and PRKAR2A. Interacts with PPP1CC. Interacts with NCL, FBL, NUP62 and U3 small nucleolar RNA. Interacts with DPY30. Interacts with PDE3A. Interacts with KANK1. Interacts with TBC1D22A and TBC1D22B. Post-translationally, phosphorylated. In vitro phosphorylated by PKA reducing its GEF activity and dephosphorylated by phosphatase PP1.

Its subcellular location is the cytoplasm. It is found in the perinuclear region. The protein localises to the golgi apparatus. It localises to the trans-Golgi network. The protein resides in the nucleus. Its subcellular location is the nucleolus. It is found in the nucleus matrix. The protein localises to the membrane. With respect to regulation, inhibited by brefeldin A. Its function is as follows. Promotes guanine-nucleotide exchange on ARF1 and ARF3. Promotes the activation of ARF1/ARF3 through replacement of GDP with GTP. Involved in vesicular trafficking. Required for the maintenance of Golgi structure; the function may be independent of its GEF activity. Required for the maturation of integrin beta-1 in the Golgi. Involved in the establishment and persistence of cell polarity during directed cell movement in wound healing. Proposed to act as A kinase-anchoring protein (AKAP) and may mediate crosstalk between Arf and PKA pathways. Inhibits GAP activity of MYO9B probably through competitive RhoA binding. The function in the nucleus remains to be determined. In Rattus norvegicus (Rat), this protein is Brefeldin A-inhibited guanine nucleotide-exchange protein 1 (Arfgef1).